We begin with the raw amino-acid sequence, 236 residues long: Phosphoribosylaminoimidazole-succinocarboxamide synthase (236 aa).

The protein belongs to the SAICAR synthetase family.

The catalysed reaction is 5-amino-1-(5-phospho-D-ribosyl)imidazole-4-carboxylate + L-aspartate + ATP = (2S)-2-[5-amino-1-(5-phospho-beta-D-ribosyl)imidazole-4-carboxamido]succinate + ADP + phosphate + 2 H(+). It participates in purine metabolism; IMP biosynthesis via de novo pathway; 5-amino-1-(5-phospho-D-ribosyl)imidazole-4-carboxamide from 5-amino-1-(5-phospho-D-ribosyl)imidazole-4-carboxylate: step 1/2. This Campylobacter curvus (strain 525.92) protein is Phosphoribosylaminoimidazole-succinocarboxamide synthase.